The chain runs to 348 residues: GMP reductase (348 aa).

108–131 (ADFQKTKDVMALSDELIFICIDIA) provides a ligand contact to NADP(+). K(+)-binding residues include glycine 181 and glycine 183. Cysteine 186 functions as the Thioimidate intermediate in the catalytic mechanism. 216–239 (IIGDGGCACAGDVAKAFGGGADFV) contributes to the NADP(+) binding site.

It belongs to the IMPDH/GMPR family. GuaC type 1 subfamily. Homotetramer.

The catalysed reaction is IMP + NH4(+) + NADP(+) = GMP + NADPH + 2 H(+). Catalyzes the irreversible NADPH-dependent deamination of GMP to IMP. It functions in the conversion of nucleobase, nucleoside and nucleotide derivatives of G to A nucleotides, and in maintaining the intracellular balance of A and G nucleotides. The chain is GMP reductase from Vibrio vulnificus (strain CMCP6).